The sequence spans 382 residues: Phenylalanine dehydrogenase (382 aa).

Arg54 contacts NAD(+). Lys78 provides a ligand contact to L-phenylalanine. Lys90 functions as the Proton donor/acceptor in the catalytic mechanism. Residues Asp125, Ser156, Thr160, 190–196, 213–214, 253–254, and 274–276 each bind NAD(+); these read GLGKVGY, DI, AF, and SAN. Asn276 contacts L-phenylalanine.

This sequence belongs to the Glu/Leu/Phe/Val dehydrogenases family.

It catalyses the reaction L-phenylalanine + NAD(+) + H2O = 3-phenylpyruvate + NH4(+) + NADH + H(+). With respect to regulation, activity is not affected by the metal chelating agent EDTA. Addition of 1 mM Mg(2+) results in 15% increase in activity, while the enzyme is strongly inhibited by 1 mM Fe(3+), Fe(2+), Cu(2+), Zn(2+) and Ag(+). Functionally, catalyzes the reversible NAD(+)-dependent oxidative deamination of L-phenylalanine to phenylpyruvate. Can also catalyze the oxidative deamination of several other amino acids, with much lower efficiency. Shows activity towards various bulky aromatic alpha-keto acids/esters and (S)-amine alcohols. Can catalyze the amination of 3-(2-chlorophenyl)-2-oxopropionic acid (CPOA) to produce 2-chloro-L-phenylalanine (2-Cl-Phe), a chemical compound used in the pharmaceutical and biotechnology industries. Shows a preference for amination over deamination. This is Phenylalanine dehydrogenase from Bacillus thermotolerans (Quasibacillus thermotolerans).